The following is a 65-amino-acid chain: Large ribosomal subunit protein bL35 (65 aa).

The disordered stretch occupies residues 24–48 (RRKAGKSHLLEHKSSDKKRSMSKTT). Residues 31 to 42 (HLLEHKSSDKKR) show a composition bias toward basic and acidic residues.

Belongs to the bacterial ribosomal protein bL35 family.

This is Large ribosomal subunit protein bL35 from Nostoc punctiforme (strain ATCC 29133 / PCC 73102).